A 352-amino-acid chain; its full sequence is C-X-C chemokine receptor type 4 (352 aa).

The important for chemokine binding and signaling stretch occupies residues 1 to 21 (MEGISIYTSDNYTEEMGSGDY). Residues 1–38 (MEGISIYTSDNYTEEMGSGDYDSIKEPCFREKNAHFNR) are Extracellular-facing. The residue at position 7 (Tyr-7) is a Sulfotyrosine. Asn-11 carries N-linked (GlcNAc...) asparagine glycosylation. Residue Tyr-12 is modified to Sulfotyrosine. Ser-18 carries O-linked (Xyl...) (chondroitin sulfate) serine glycosylation. Tyr-21 bears the Sulfotyrosine mark. 2 disulfides stabilise this stretch: Cys-28-Cys-274 and Cys-109-Cys-186. The helical transmembrane segment at 39-63 (IFLPTIYSIIFLTGIVGNGLVILVM) threads the bilayer. Over 64-77 (GYQKKLRSMTDKYR) the chain is Cytoplasmic. Residues 78-99 (LHLSVADLLFVITLPFWAVDAV) traverse the membrane as a helical segment. Positions 94–97 (WAVD) are chemokine binding. The Extracellular segment spans residues 100–110 (ANWYFGNFLCK). A helical membrane pass occupies residues 111–130 (AVHVIYTVNLYSSVLILAFI). The chemokine binding stretch occupies residues 113-117 (HVIYT). At 131–154 (SLDRYLAIVHATNSQKPRKLLAEK) the chain is on the cytoplasmic side. An Important for signaling motif is present at residues 133-135 (DRY). The segment at 135 to 147 (YLAIVHATNSQKP) is involved in dimerization; when bound to chemokine. A helical transmembrane segment spans residues 155–174 (VVYVGVWIPALLLTIPGFIF). Topologically, residues 175 to 195 (ASVSEADDRFICDRFYPNDLW) are extracellular. The tract at residues 186–190 (CDRFY) is chemokine binding, important for signaling. The segment at 191 to 210 (PNDLWVVVFQFQHIMVGLIL) is involved in dimerization. Residues 196–216 (VVVFQFQHIMVGLILPGIVIL) form a helical membrane-spanning segment. Topologically, residues 217-241 (SCYCIIISKLSHSKGHQKRKALKTT) are cytoplasmic. Residues 242-261 (VILILAFFACWLPYYIGISI) traverse the membrane as a helical segment. The Extracellular portion of the chain corresponds to 262–282 (DSFILLEIIKQGCEFENTVHK). The tract at residues 266-268 (LLE) is involved in dimerization. Residues 283–302 (WISITEALAFFHCCLNPILY) traverse the membrane as a helical segment. Residues 303 to 352 (AFLGAKFKTSAQHALTSVSRGSSLKILSKGKRGGHSSVSTESESSSFHSS) lie on the Cytoplasmic side of the membrane. Phosphoserine occurs at positions 319 and 321. Residues Ser-324 and Ser-325 each carry the phosphoserine; by PKC and GRK6 modification. The segment at 329–352 (LSKGKRGGHSSVSTESESSSFHSS) is disordered. Ser-330 is subject to Phosphoserine; by GRK6. Residue Lys-331 forms a Glycyl lysine isopeptide (Lys-Gly) (interchain with G-Cter in ubiquitin) linkage. Residues 337–352 (HSSVSTESESSSFHSS) show a composition bias toward low complexity. Ser-339 is subject to Phosphoserine; by GRK6. Residues Ser-348 and Ser-351 each carry the phosphoserine modification.

It belongs to the G-protein coupled receptor 1 family. In terms of assembly, monomer. Can form homodimers. Interacts with CD164. Interacts with ARRB2; the interaction is dependent on the C-terminal phosphorylation of CXCR4 and allows activation of MAPK1 and MAPK3. Interacts with ARR3; the interaction is dependent on the C-terminal phosphorylation of CXCR4 and modulates calcium mobilization. Interacts with RNF113A; the interaction, enhanced by CXCL12, promotes CXCR4 ubiquitination and subsequent degradation. Interacts (via the cytoplasmic C-terminal) with ITCH (via the WW domains I and II); the interaction, enhanced by CXCL12, promotes CXCR4 ubiquitination and leads to its degradation. Interacts with extracellular ubiquitin. Interacts with DBN1; this interaction is enhanced by antigenic stimulation. Following LPS binding, may form a complex with GDF5, HSP90AA1 and HSPA8. In terms of processing, phosphorylated on agonist stimulation. Rapidly phosphorylated on serine and threonine residues in the C-terminal. Phosphorylation at Ser-324 and Ser-325 leads to recruitment of ITCH, ubiquitination and protein degradation. Ubiquitinated after ligand binding, leading to its degradation. Ubiquitinated by ITCH at the cell membrane on agonist stimulation. The ubiquitin-dependent mechanism, endosomal sorting complex required for transport (ESCRT), then targets CXCR4 for lysosomal degradation. This process is dependent also on prior Ser-/Thr-phosphorylation in the C-terminal of CXCR4. Also binding of ARRB1 to STAM negatively regulates CXCR4 sorting to lysosomes though modulating ubiquitination of SFR5S. Post-translationally, sulfation is required for efficient binding of CXCL12/SDF-1alpha and promotes its dimerization. In terms of processing, O- and N-glycosylated. N-glycosylation can mask coreceptor function. The O-glycosylation chondroitin sulfate attachment does not affect interaction with CXCL12/SDF-1alpha nor its coreceptor activity.

Its subcellular location is the cell membrane. It localises to the cell junction. The protein resides in the early endosome. It is found in the late endosome. The protein localises to the lysosome. In terms of biological role, receptor for the C-X-C chemokine CXCL12/SDF-1 that transduces a signal by increasing intracellular calcium ion levels and enhancing MAPK1/MAPK3 activation. Involved in the AKT signaling cascade. Plays a role in regulation of cell migration, e.g. during wound healing. Acts as a receptor for extracellular ubiquitin; leading to enhanced intracellular calcium ions and reduced cellular cAMP levels. Binds bacterial lipopolysaccharide (LPS) et mediates LPS-induced inflammatory response, including TNF secretion by monocytes. Involved in hematopoiesis and in cardiac ventricular septum formation. Also plays an essential role in vascularization of the gastrointestinal tract, probably by regulating vascular branching and/or remodeling processes in endothelial cells. Involved in cerebellar development. In the CNS, could mediate hippocampal-neuron survival. The polypeptide is C-X-C chemokine receptor type 4 (CXCR4) (Cercocebus atys (Sooty mangabey)).